Here is a 338-residue protein sequence, read N- to C-terminus: uncharacterized protein (338 aa).

The chain crosses the membrane as a helical span at residues 20–40 (IFFTLTFSLSNLFLAICYLFL).

Its subcellular location is the membrane. This is an uncharacterized protein from Schizosaccharomyces pombe (strain 972 / ATCC 24843) (Fission yeast).